Reading from the N-terminus, the 1477-residue chain is Neuralized-like protein 4 (1477 aa).

Disordered regions lie at residues M1 to P26 and Q168 to K196. The 167-residue stretch at M1–C167 folds into the NHR 1 domain. Acidic residues predominate over residues P171–E183. 4 NHR domains span residues A250–N417, Q450–E616, D645–G813, and S841–S1010. The segment at L1012–H1041 is disordered. Residues S1048–G1211 enclose the NHR 6 domain.

In terms of processing, ubiquitinated. This ubiquitination leads to proteasomal degradation.

It localises to the cytoplasm. The protein resides in the cytoskeleton. It is found in the microtubule organizing center. The protein localises to the centrosome. Its subcellular location is the centriole. Promotes CCP110 ubiquitination and proteasome-dependent degradation. By counteracting accumulation of CP110, maintains normal centriolar homeostasis and preventing formation of ectopic microtubular organizing centers. In Xenopus tropicalis (Western clawed frog), this protein is Neuralized-like protein 4 (neurl4).